Here is a 276-residue protein sequence, read N- to C-terminus: NH(3)-dependent NAD(+) synthetase (276 aa).

An ATP-binding site is contributed by 43 to 50; sequence GISGGVDS. Aspartate 49 provides a ligand contact to Mg(2+). Arginine 146 lines the deamido-NAD(+) pocket. An ATP-binding site is contributed by threonine 166. Glutamate 171 is a Mg(2+) binding site. Positions 179 and 186 each coordinate deamido-NAD(+). Lysine 195 and threonine 217 together coordinate ATP. 266 to 267 is a binding site for deamido-NAD(+); that stretch reads HK.

It belongs to the NAD synthetase family. Homodimer.

It carries out the reaction deamido-NAD(+) + NH4(+) + ATP = AMP + diphosphate + NAD(+) + H(+). The protein operates within cofactor biosynthesis; NAD(+) biosynthesis; NAD(+) from deamido-NAD(+) (ammonia route): step 1/1. Its function is as follows. Catalyzes the ATP-dependent amidation of deamido-NAD to form NAD. Uses ammonia as a nitrogen source. This Shewanella pealeana (strain ATCC 700345 / ANG-SQ1) protein is NH(3)-dependent NAD(+) synthetase.